Consider the following 204-residue polypeptide: MRTLDKRIAPNVKLAASLVARAPTLTLAYDARCKSRLAATLDTGEDVAVLLPRGTVLRDGDVLVADDGALVRIAAAPETVLLVRAADPLTLMRAAYHLGNRHTPVEIGDGYLKLEADPVLADMLRRLGTQVDETHAPFQPEAGAYGGGHKHGHDATFAEDYALAQQVFGEHHGHAHSHDHDHDHDHDHQHGPGCTHGHHGHDHH.

Residues 172 to 190 show a composition bias toward basic and acidic residues; it reads HGHAHSHDHDHDHDHDHQH. Residues 172-204 are disordered; sequence HGHAHSHDHDHDHDHDHQHGPGCTHGHHGHDHH.

It belongs to the UreE family.

The protein resides in the cytoplasm. Involved in urease metallocenter assembly. Binds nickel. Probably functions as a nickel donor during metallocenter assembly. The chain is Urease accessory protein UreE from Burkholderia orbicola (strain AU 1054).